The primary structure comprises 151 residues: Acidic phospholipase A2 1 (151 aa).

Positions 1 to 27 are cleaved as a signal peptide; it reads MYPAHLLVLLAVCVSLLGAASIPARPL. 7 cysteine pairs are disulfide-bonded: cysteine 38/cysteine 104, cysteine 54/cysteine 151, cysteine 56/cysteine 72, cysteine 71/cysteine 132, cysteine 78/cysteine 125, cysteine 88/cysteine 118, and cysteine 111/cysteine 123. Residues tyrosine 55, glycine 57, and glycine 59 each contribute to the Ca(2+) site. Residue histidine 75 is part of the active site. Aspartate 76 is a Ca(2+) binding site. Aspartate 126 is an active-site residue.

It belongs to the phospholipase A2 family. Group I subfamily. D49 sub-subfamily. Ca(2+) is required as a cofactor. In terms of tissue distribution, expressed by the venom gland.

The protein resides in the secreted. The enzyme catalyses a 1,2-diacyl-sn-glycero-3-phosphocholine + H2O = a 1-acyl-sn-glycero-3-phosphocholine + a fatty acid + H(+). Functionally, PLA2 catalyzes the calcium-dependent hydrolysis of the 2-acyl groups in 3-sn-phosphoglycerides. This Tropidechis carinatus (Australian rough-scaled snake) protein is Acidic phospholipase A2 1.